We begin with the raw amino-acid sequence, 340 residues long: DnaJ homolog subfamily B member 1 (340 aa).

The J domain maps to 2 to 70; the sequence is GKDYYQTLGL…REIFDRYGEE (69 aa). A Phosphothreonine modification is found at threonine 307.

As to quaternary structure, interacts with DNAJC3. Interacts with HSF1 (via transactivation domain); this interaction results in the inhibition of heat shock- and HSF1-induced transcriptional activity during the attenuation and recovery phase period of the heat shock response. Interacts with BAG3.

The protein resides in the cytoplasm. The protein localises to the nucleus. Its subcellular location is the nucleolus. Its function is as follows. Interacts with HSP70 and can stimulate its ATPase activity. Stimulates the association between HSC70 and HIP. Negatively regulates heat shock-induced HSF1 transcriptional activity during the attenuation and recovery phase period of the heat shock response. Stimulates ATP hydrolysis and the folding of unfolded proteins mediated by HSPA1A/B (in vitro). The sequence is that of DnaJ homolog subfamily B member 1 (DNAJB1) from Homo sapiens (Human).